A 551-amino-acid chain; its full sequence is Scaffold protein OPG125 (551 aa).

This sequence belongs to the orthopoxvirus protein OPG125 family. As to quaternary structure, interacts with the late transcription elongation factor VLTF-4/OPG110. Interacts with the late transcription factors VLTF-1.

Its subcellular location is the membrane. Functionally, acts with RNA polymerase to initiate transcription from late gene promoters. This Monkeypox virus protein is Scaffold protein OPG125 (OPG125).